We begin with the raw amino-acid sequence, 275 residues long: Polyamine aminopropyltransferase (275 aa).

In terms of domain architecture, PABS spans E2–K235. Q31 provides a ligand contact to S-methyl-5'-thioadenosine. Residues H62 and D86 each contribute to the spermidine site. S-methyl-5'-thioadenosine is bound by residues D106 and D137–G138. D155 acts as the Proton acceptor in catalysis. D155–E158 provides a ligand contact to spermidine. P162 provides a ligand contact to S-methyl-5'-thioadenosine.

Belongs to the spermidine/spermine synthase family. Homodimer or homotetramer.

It localises to the cytoplasm. The enzyme catalyses S-adenosyl 3-(methylsulfanyl)propylamine + putrescine = S-methyl-5'-thioadenosine + spermidine + H(+). It participates in amine and polyamine biosynthesis; spermidine biosynthesis; spermidine from putrescine: step 1/1. Catalyzes the irreversible transfer of a propylamine group from the amino donor S-adenosylmethioninamine (decarboxy-AdoMet) to putrescine (1,4-diaminobutane) to yield spermidine. The polypeptide is Polyamine aminopropyltransferase (Shouchella clausii (strain KSM-K16) (Alkalihalobacillus clausii)).